Consider the following 130-residue polypeptide: MGLLLLLVGIGGGFGAMARFALTQATASISKQIPLGILLCNIIGSLIIGMMAAFLIETKLFNEDVSAYVRFLLVTGFLGGFTTFSSFSLDILNLLQRGEIFIAIGYIMVSVLASLIAVILGFYIVMGVYK.

A run of 4 helical transmembrane segments spans residues 2 to 22 (GLLLLLVGIGGGFGAMARFAL), 36 to 56 (GILLCNIIGSLIIGMMAAFLI), 71 to 91 (FLLVTGFLGGFTTFSSFSLDI), and 100 to 120 (IFIAIGYIMVSVLASLIAVIL). Residues Gly79 and Thr82 each coordinate Na(+).

Belongs to the fluoride channel Fluc/FEX (TC 1.A.43) family.

Its subcellular location is the cell inner membrane. The catalysed reaction is fluoride(in) = fluoride(out). With respect to regulation, na(+) is not transported, but it plays an essential structural role and its presence is essential for fluoride channel function. Fluoride-specific ion channel. Important for reducing fluoride concentration in the cell, thus reducing its toxicity. The sequence is that of Fluoride-specific ion channel FluC from Francisella tularensis subsp. mediasiatica (strain FSC147).